The chain runs to 270 residues: MAPRVFYISDGTAITAEVFGHAVLSQFPIEFEALTIPFVETLVKAEKVKLQINDCFITTGERPLVFHSIVNPDIRNVIYSSEGMDYDFLNTFVAPLEQHLGIQACPVLHRTHGKGNHSYEARIDAINFSMENDDGQTMKHMDKADIILLGVSRCGKTPSSLYLSMQFGIKAANYPFTEDDMDNLKLPDALKRNKNKLFGLTIDPNRLHEIRQSRMENSRYSSLRQCRLEVKEVEMMYKRERIPFVDTTNHSVEEIATKILDVTGLARHMF.

ADP is bound at residue 150–157 (GVSRCGKT).

It belongs to the pyruvate, phosphate/water dikinase regulatory protein family. PSRP subfamily.

The enzyme catalyses [pyruvate, water dikinase] + ADP = [pyruvate, water dikinase]-phosphate + AMP + H(+). It carries out the reaction [pyruvate, water dikinase]-phosphate + phosphate + H(+) = [pyruvate, water dikinase] + diphosphate. In terms of biological role, bifunctional serine/threonine kinase and phosphorylase involved in the regulation of the phosphoenolpyruvate synthase (PEPS) by catalyzing its phosphorylation/dephosphorylation. The chain is Putative phosphoenolpyruvate synthase regulatory protein from Shewanella denitrificans (strain OS217 / ATCC BAA-1090 / DSM 15013).